The chain runs to 79 residues: DNA-directed RNA polymerase subunit omega (79 aa).

It belongs to the RNA polymerase subunit omega family. The RNAP catalytic core consists of 2 alpha, 1 beta, 1 beta' and 1 omega subunit. When a sigma factor is associated with the core the holoenzyme is formed, which can initiate transcription.

It catalyses the reaction RNA(n) + a ribonucleoside 5'-triphosphate = RNA(n+1) + diphosphate. Its function is as follows. Promotes RNA polymerase assembly. Latches the N- and C-terminal regions of the beta' subunit thereby facilitating its interaction with the beta and alpha subunits. The sequence is that of DNA-directed RNA polymerase subunit omega from Thermotoga petrophila (strain ATCC BAA-488 / DSM 13995 / JCM 10881 / RKU-1).